Here is a 315-residue protein sequence, read N- to C-terminus: Protein OPG185 (315 aa).

An N-terminal signal peptide occupies residues 1–16 (MTRLPILLLLISLVYA). The Ig-like V-type domain maps to 17 to 121 (TPFPQTSKKI…NDTDKVDYEE (105 aa)). At 17-279 (TPFPQTSKKI…SNYKTKDFVE (263 aa)) the chain is on the virion surface side. A disulfide bond links Cys34 and Cys103. 4 N-linked (GlcNAc...) asparagine; by host glycosylation sites follow: Asn37, Asn69, Asn112, and Asn161. Residues 193–202 (NTVSASSGES) show a composition bias toward polar residues. The segment at 193–213 (NTVSASSGESTTDETPEPITD) is disordered. A glycan (N-linked (GlcNAc...) asparagine; by host) is linked at Asn254. The chain crosses the membrane as a helical span at residues 280–303 (IFGITALIILSAVAIFCITYYIYN). Residues 304-315 (KRSRKYKTENKV) lie on the Intravirion side of the membrane.

The protein belongs to the orthopoxvirus OPG185 family. Heterodimerizes with OPG040. The heterodimer OPG185-OPG040 interacts with components of the entry fusion complex OPG143 and OPG094. Heterodimer with C3/VPC protein; disulfide-linked. In terms of processing, glycosylated; contains phosphate and sulfate-substituted glycans. O-glycosylation is required for hemagglutination and hemadsorption activities of infected cell membranes.

The protein resides in the virion membrane. Its subcellular location is the host membrane. Its function is as follows. Prevents cell to cell fusion by interacting with and directing the viral OPG040 protein on the host plasma membrane. The OPG185-OPG040 complex associates with components of the entry fusion complex (EFC) presumably to avoid superinfection and syncytium formation. Via its interaction with C3/VCP protein, protects the infected cell and probably also the extracellular enveloped virus from complement attack. The protein is Protein OPG185 (OPG185) of Homo sapiens (Human).